The following is a 349-amino-acid chain: 5-deoxyribose 1-phosphate isomerase (349 aa).

Substrate-binding positions include 49-51 (RGA), Arg-92, and Gln-199. Asp-240 functions as the Proton donor in the catalytic mechanism. Position 250–251 (250–251 (NK)) interacts with substrate.

The protein belongs to the EIF-2B alpha/beta/delta subunits family. DrdI subfamily.

The enzyme catalyses 5-deoxy-alpha-D-ribose 1-phosphate = 5-deoxy-D-ribulose 1-phosphate. It participates in carbohydrate degradation. In terms of biological role, catalyzes the isomerization of 5-deoxy-alpha-D-ribose 1-phosphate to 5-deoxy-D-ribulose 1-phosphate, as part of a 5-deoxyribose salvage pathway that recycles this toxic radical SAM enzyme by-product to mainstream metabolites. This chain is 5-deoxyribose 1-phosphate isomerase, found in Clostridium botulinum (strain Langeland / NCTC 10281 / Type F).